A 244-amino-acid polypeptide reads, in one-letter code: tRNA pseudouridine synthase A (244 aa).

Asp-53 acts as the Nucleophile in catalysis. Tyr-111 lines the substrate pocket.

This sequence belongs to the tRNA pseudouridine synthase TruA family. In terms of assembly, homodimer.

The enzyme catalyses uridine(38/39/40) in tRNA = pseudouridine(38/39/40) in tRNA. In terms of biological role, formation of pseudouridine at positions 38, 39 and 40 in the anticodon stem and loop of transfer RNAs. The sequence is that of tRNA pseudouridine synthase A from Bacillus sp. (strain KSM-64).